Reading from the N-terminus, the 297-residue chain is Small ribosomal subunit protein uS2 (297 aa).

Positions 276–297 are disordered; sequence DWASSAPAEGWAGEAPATEAKW.

It belongs to the universal ribosomal protein uS2 family. As to quaternary structure, component of the small ribosomal subunit. Mature ribosomes consist of a small (40S) and a large (60S) subunit. The 40S subunit contains about 33 different proteins and 1 molecule of RNA (18S). The 60S subunit contains about 49 different proteins and 3 molecules of RNA (25S, 5.8S and 5S). Interacts with RPS21.

It localises to the cytoplasm. In terms of biological role, required for the assembly and/or stability of the 40S ribosomal subunit. Required for the processing of the 20S rRNA-precursor to mature 18S rRNA in a late step of the maturation of 40S ribosomal subunits. The chain is Small ribosomal subunit protein uS2 from Uncinocarpus reesii (strain UAMH 1704).